Consider the following 343-residue polypeptide: Serpentine receptor class alpha-11 (343 aa).

The Extracellular segment spans residues 1–24 (MSSPDTPVCASPQQMEMYNSHFYT). A helical transmembrane segment spans residues 25–45 (CALFFNLLIAFTSMTLIIMAI). At 46–60 (RKLLTESIINTSTRM) the chain is on the cytoplasmic side. A helical membrane pass occupies residues 61–81 (FLIVGLLCCSLHQTAYIVLRV). The Extracellular segment spans residues 82 to 106 (QVIFQILFKLDQPCKLYYKAYDCKY). Residues 107 to 127 (VTFSLVAGNTGMIFIQSAMTI) form a helical membrane-spanning segment. Topologically, residues 128–146 (DRILTTVFTNLWPKLKYWP) are cytoplasmic. A helical transmembrane segment spans residues 147–167 (GVILSSFMIGCNFTNVQFIFW). The Extracellular portion of the chain corresponds to 168-192 (NDPLTDYVPTCGQFPPKSVGRFQKF). A helical membrane pass occupies residues 193 to 213 (LEIALYMSLAHMVINVIILYI). The Cytoplasmic segment spans residues 214 to 247 (NVVQDRRQRLVSTHDQSQSFDVNQRFQSRVALKS). A helical transmembrane segment spans residues 248–268 (TQAIFFLSMSQFLSCFLYTIF). Residues 269–291 (TKLYLTLQPDMTPLQSGLTLALT) lie on the Extracellular side of the membrane. The helical transmembrane segment at 292–312 (YTTPYACIAIPSLIMVTLTFI) threads the bilayer. Over 313 to 343 (RNQRHRSINALRSQTETGDQYMQKIKKIWDK) the chain is Cytoplasmic.

It belongs to the nematode receptor-like protein sra family.

It localises to the membrane. A G protein-coupled receptor required for olfactory imprinting a requisite in ordorant response such as benzaldehyde and isoamylalcohol. In Caenorhabditis briggsae, this protein is Serpentine receptor class alpha-11.